Here is a 274-residue protein sequence, read N- to C-terminus: MKFFAVFALCVASVSAANLDAIAKPGFPAGRIINGHEAEKGEAPFIVSLKAGKGHFCGGSIIAENWVLTAGHCLIFDEFEIVAGLHSRNDESDVQIRKVTGKHQQIVHEKYGGGVGPNDIGLIYVDKPFNLNALTRDGTAAVAKVNLPTGKYESTGEGKLYGWGLDNSGFSPNILNTLDVNIIGYEECKNALNSDAPLDPVNICSYTAGAIDGACNGDSGGPMVRITPDGTELVGIVSWGYQPCASTTMPSVYTWTSAFDKWIEDSIENYAQLL.

A signal peptide spans 1 to 16 (MKFFAVFALCVASVSA). The Peptidase S1 domain occupies 32-268 (IINGHEAEKG…FDKWIEDSIE (237 aa)). An intrachain disulfide couples Cys57 to Cys73. Active-site charge relay system residues include His72 and Asp119. 2 cysteine pairs are disulfide-bonded: Cys188–Cys204 and Cys215–Cys244. Ser219 functions as the Charge relay system in the catalytic mechanism.

This sequence belongs to the peptidase S1 family. Expressed in the midgut.

Its subcellular location is the secreted. Functionally, protein with lectin and protease activity involved in the establishment of trypanosome infections in tsetse flies. Binds D-glucosamine and agglutinates bloodstream-form trypanosomes and rabbit red blood cells. Capable of inducing transformation of bloodstream-form trypanosomes into procyclic (midgut) forms in vitro. The sequence is that of Lectizyme (Gpl) from Glossina austeni (Savannah tsetse fly).